The chain runs to 294 residues: Phosphatidylglycerol--prolipoprotein diacylglyceryl transferase (294 aa).

7 helical membrane-spanning segments follow: residues 21-41 (VSLH…LWLA), 60-80 (LLYV…VLFY), 96-116 (WDGG…MIWF), 124-144 (FFQV…LGRI), 199-219 (SQLY…NIFV), 226-246 (GSVS…VEFF), and 259-279 (ISMG…FMVW). Arginine 143 is a binding site for a 1,2-diacyl-sn-glycero-3-phospho-(1'-sn-glycerol).

The protein belongs to the Lgt family.

It localises to the cell inner membrane. It carries out the reaction L-cysteinyl-[prolipoprotein] + a 1,2-diacyl-sn-glycero-3-phospho-(1'-sn-glycerol) = an S-1,2-diacyl-sn-glyceryl-L-cysteinyl-[prolipoprotein] + sn-glycerol 1-phosphate + H(+). The protein operates within protein modification; lipoprotein biosynthesis (diacylglyceryl transfer). In terms of biological role, catalyzes the transfer of the diacylglyceryl group from phosphatidylglycerol to the sulfhydryl group of the N-terminal cysteine of a prolipoprotein, the first step in the formation of mature lipoproteins. The protein is Phosphatidylglycerol--prolipoprotein diacylglyceryl transferase of Proteus mirabilis (strain HI4320).